The chain runs to 196 residues: MSSKEQKTPEGQAPEEIIMDQHEEVEAVEPNDSAEQVDPRDEKIANLEVQLAEAQTRERDTVLRIKAEMENLRRRTEQDIEKAHKFALEKFVNELLPVIDSLDRALEVADKANPDMAAMVEGIELTLKSMLDVVRKFGVEVIAETNVPMDPNVHQAIAMVESEEVPAGNVLGIMQKGYTLNGRTIRAAMVTVAKAK.

Residues 1-40 are disordered; that stretch reads MSSKEQKTPEGQAPEEIIMDQHEEVEAVEPNDSAEQVDPR.

The protein belongs to the GrpE family. In terms of assembly, homodimer.

The protein resides in the cytoplasm. Participates actively in the response to hyperosmotic and heat shock by preventing the aggregation of stress-denatured proteins, in association with DnaK and GrpE. It is the nucleotide exchange factor for DnaK and may function as a thermosensor. Unfolded proteins bind initially to DnaJ; upon interaction with the DnaJ-bound protein, DnaK hydrolyzes its bound ATP, resulting in the formation of a stable complex. GrpE releases ADP from DnaK; ATP binding to DnaK triggers the release of the substrate protein, thus completing the reaction cycle. Several rounds of ATP-dependent interactions between DnaJ, DnaK and GrpE are required for fully efficient folding. The protein is Protein GrpE of Salmonella gallinarum (strain 287/91 / NCTC 13346).